Reading from the N-terminus, the 256-residue chain is Homeobox protein ceh-34 (256 aa).

The homeobox DNA-binding region spans 134–193 (GEETNYCFKSKSRNVLRDAYKKCQYPSVEDKRRLAQQTELSIIQVSNWFKNKRQRERAAG). The tract at residues 187–233 (QRERAAGQLDRSSARSNDSDDGSSGCESKPPMNIDSPAPPPLPTSFD) is disordered.

The protein belongs to the SIX/Sine oculis homeobox family. In terms of assembly, interacts (via N-terminus) with eya-1 (via C-terminus). As to expression, shows expression only in the pharyngeal nervous system.

It localises to the nucleus. Acts as a transcription regulator. Binds to the sequence motif 5'-TCAGGTT-3'. Binds to the cis-regulatory element of proapoptotic factor egl-1 gene and together with eya-1 activates egl-1 expression to promote motor neuron M4 sister cell apoptosis. Also promotes apoptosis of I1 pharyngeal neuron sister cell. Together with eya-1, required to specify the coelomocyte fate in embryonic and postembryonic precursors. Required to establish and maintain the differentiation of all 14 classes of pharyngeal neurons. Controls the neurotransmitter signaling capacity of the neurons and is required for the expression of some neurotransmitter receptors including mgl-1, glr-2 and ser-7. Affects the neuropeptidergic identity of pharyngeal neurons. Required for the pharyngeal expression of sensory receptors gur-3, glu-7 and str-97, antimicrobial defense genes such as spp-12, gpla-1/flr-2 and htrl-1, and pan-pharyngeal nervous system genes such as kin-36. Required to establish and maintain pharyngeal nervous system architecture by ensuring correct axon and synapse organization. Required for expression of eya-1 which may act as a transcriptional cofactor to specify distinct pharyngeal neuron types. Cooperates with several homeobox proteins to specify distinct pharyngeal neuron types including unc-86 in the NSM and I1 neurons, ceh-14 in the I2 neuron, ceh-2 and pros-1 in the I3 neuron, ceh-45 in the M1 neuron, ceh-2 in the M3 neuron, ceh-28 and zag-1 in the M4 neuron, and vab-15 in the M5 neuron. This Caenorhabditis elegans protein is Homeobox protein ceh-34 (ceh-34).